We begin with the raw amino-acid sequence, 301 residues long: UstYa family oxidase phomYd (301 aa).

The disordered stretch occupies residues 1–26 (MEKFFSPSRHNYADLSPTDVPASEES). Residues 47-69 (VLVNRLLAASTVALVMVSLWLGW) form a helical membrane-spanning segment. 2 short sequence motifs (HXXHC) span residues 189 to 194 (THSVHC) and 218 to 222 (HTDHC). An N-linked (GlcNAc...) asparagine glycan is attached at asparagine 275.

Belongs to the ustYa family.

The protein resides in the membrane. The protein operates within mycotoxin biosynthesis. In terms of biological role, ustYa family oxidase; part of the gene cluster that mediates the biosynthesis of the phomopsins, a group of hexapeptide mycotoxins which infects lupins and causes lupinosis disease in livestock. Within the pathway, phomYd catalyzes the desaturation of the Asp moiety into 2,3-dehydroaspartic acid (dAsp). The pathway starts with the processing of the precursor phomA by several endopeptidases including kexin proteases as well as the cluster-specific S41 family peptidase phomP1 and the oligopeptidase phomG to produce 10 identical copies of the hexapeptide Tyr-Val-Ile-Pro-Ile-Asp. After being excised from the precursor peptide, the core peptides are cyclized and modified post-translationally by enzymes encoded within the gene cluster. The timing and order of proteolysis of the phomA precursor and PTMs are still unknown. Two tyrosinase-like enzymes, phomQ1 and phomQ2, catalyze the chlorination and hydroxylation of Tyr, respectively. PhomYb, is proposed to be involved in the construction of the macrocyclic structure. The other 4 ustYa family proteins may be involved in PTMs that generate the unique structure of phomopsin A. PhomYa is required for the hydroxylation of C-beta of Tyr. PhomYc, phomYd, and phomYe are responsible for the biosynthesis of 2,3-dehydroisoleucine (dIle), 2,3-dehydroaspartic acid (dAsp), and 3,4-dehydroproline (dPro), respectively. While dIle formation by phomYc is indispensable for the installation of dAsp by phomYd, the order of the other PTMs have not been elucidated yet. Most of the biosynthetic enzymes likely have broad substrate specificity, and thus, there might be a metabolic grid from a precursor to phomopsin A. The enzyme(s) responsible for the biosynthesis of 3,4-dehydrovaline (dVal) have also not been identified yet. Finally, phomM acts as an S-adenosylmethionine-dependent alpha-N-methyltransferase that catalyzes two successive N-methylation reactions, converting N-desmethyl-phomopsin A to phomopsin A and phomopsin A further to an N,N-dimethylated congener called phomopsin E. This chain is UstYa family oxidase phomYd, found in Diaporthe leptostromiformis (Lupinosis disease fungus).